The following is a 288-amino-acid chain: ATP synthase gamma chain (288 aa).

It belongs to the ATPase gamma chain family. In terms of assembly, F-type ATPases have 2 components, CF(1) - the catalytic core - and CF(0) - the membrane proton channel. CF(1) has five subunits: alpha(3), beta(3), gamma(1), delta(1), epsilon(1). CF(0) has three main subunits: a, b and c.

It localises to the cell inner membrane. Its function is as follows. Produces ATP from ADP in the presence of a proton gradient across the membrane. The gamma chain is believed to be important in regulating ATPase activity and the flow of protons through the CF(0) complex. In Aliivibrio fischeri (strain ATCC 700601 / ES114) (Vibrio fischeri), this protein is ATP synthase gamma chain.